We begin with the raw amino-acid sequence, 344 residues long: Meiotic expression up-regulated protein 26 (344 aa).

Its subcellular location is the nucleus. The sequence is that of Meiotic expression up-regulated protein 26 (meu26) from Schizosaccharomyces pombe (strain 972 / ATCC 24843) (Fission yeast).